The following is a 1218-amino-acid chain: DNA polymerase subunit gamma-1 (1218 aa).

The segment at 31 to 50 (LDPVPSDGRPPSQMPSSENG) is disordered. Positions 179 to 183 (VFDVE) match the Exo I motif. The active-site Exonuclease activity is the Asp181. The Exo II signature appears at 250 to 258 (VGHNVSFDR). Residue Ser289 participates in DNA binding. An Exo III motif is present at residues 378 to 386 (YCARDVWAT). The segment at 484–524 (KKVKKPASASKLPIEGAGPFGDPMDQEDPGPPSEEEELQRS) is disordered. Positions 492–553 (ASKLPIEGAG…RPQHLPGHPG (62 aa)) are accessory-interacting determinant. The segment covering 507 to 520 (MDQEDPGPPSEEEE) has biased composition (acidic residues). Arg561 is an RNA binding site. A DNA-binding site is contributed by Ser575. Residues His733, Gly742, and Lys747 each coordinate RNA. 2 residues coordinate DNA: Lys785 and Thr828. The trigger loop stretch occupies residues 837–843 (TWLTASN). Positions 842 and 848 each coordinate RNA. The Pol A signature appears at 866–875 (VGADVDSQEL). Residues Asp869, Val870, Ser872, Glu874, Arg922, Lys926, and Tyr930 each coordinate a 2'-deoxyribonucleoside 5'-triphosphate. 2 residues coordinate Mg(2+): Asp869 and Val870. A Pol B motif is present at residues 922–937 (REHAKIFNYGRIYGAG). DNA contacts are provided by Thr1073 and Ser1074. Positions 1113 to 1120 (HDEVRYLV) match the Pol C motif. Residue Asp1114 coordinates a 2'-deoxyribonucleoside 5'-triphosphate. Asp1114 serves as a coordination point for Mg(2+).

Belongs to the DNA polymerase type-A family. As to quaternary structure, heterotrimer composed of a catalytic subunit and a homodimer of accessory subunits (POLG:POLG2). Interacts with TTC3. Interacts with LIG3. It depends on Mg(2+) as a cofactor.

It localises to the mitochondrion. It is found in the mitochondrion matrix. The protein localises to the mitochondrion nucleoid. It carries out the reaction DNA(n) + a 2'-deoxyribonucleoside 5'-triphosphate = DNA(n+1) + diphosphate. It catalyses the reaction a 3'-end 2'-deoxyribonucleotidyl-deoxyribonucleotide-DNA + H2O = a 3'-end 2'-deoxyribonucleotide-DNA + a 2'-deoxyribonucleoside 5'-phosphate + H(+). The catalysed reaction is a 5'-end 2'-deoxyribose-2'-deoxyribonucleotide-DNA = (2E,4S)-4-hydroxypenten-2-al-5-phosphate + a 5'-end 5'-phospho-2'-deoxyribonucleoside-DNA + H(+). Inhibited by dideoxynucleotides such as antiviral agent zalcitabine. In terms of biological role, catalytic subunit of DNA polymerase gamma solely responsible for replication of mitochondrial DNA (mtDNA). Replicates both heavy and light strands of the circular mtDNA genome using a single-stranded DNA template, RNA primers and the four deoxyribonucleoside triphosphates as substrates. Has 5' -&gt; 3' polymerase activity. Functionally interacts with TWNK and SSBP1 at the replication fork to form a highly processive replisome, where TWNK unwinds the double-stranded DNA template prior to replication and SSBP1 covers the parental heavy strand to enable continuous replication of the entire mitochondrial genome. A single nucleotide incorporation cycle includes binding of the incoming nucleotide at the insertion site, a phosphodiester bond formation reaction that extends the 3'-end of the primer DNA, and translocation of the primer terminus to the post-insertion site. After completing replication of a mtDNA strand, mediates 3' -&gt; 5' exonucleolytic degradation at the nick to enable proper ligation. Highly accurate due to high nucleotide selectivity and 3' -&gt; 5' exonucleolytic proofreading. Proficiently corrects base substitutions, single-base additions and deletions in non-repetitive sequences and short repeats, but displays lower proofreading activity when replicating longer homopolymeric stretches. Exerts exonuclease activity toward single-stranded DNA and double-stranded DNA containing 3'-terminal mispairs. When a misincorporation occurs, transitions from replication to a pro-nucleolytic editing mode and removes the missincorporated nucleoside in the exonuclease active site. Proceeds via an SN2 nucleolytic mechanism in which Asp-198 catalyzes phosphodiester bond hydrolysis and Glu-200 stabilizes the leaving group. As a result the primer strand becomes one nucleotide shorter and is positioned in the post-insertion site, ready to resume DNA synthesis. Exerts 5'-deoxyribose phosphate (dRP) lyase activity and mediates repair-associated mtDNA synthesis (gap filling) in base-excision repair pathway. Catalyzes the release of the 5'-terminal 2-deoxyribose-5-phosphate sugar moiety from incised apurinic/apyrimidinic (AP) sites to produce a substrate for DNA ligase. The dRP lyase reaction does not require divalent metal ions and likely proceeds via a Schiff base intermediate in a beta-elimination reaction mechanism. The polypeptide is DNA polymerase subunit gamma-1 (Mus musculus (Mouse)).